The primary structure comprises 59 residues: MAVQQNKKSPSKRGMHRSHDFLTTAPIAVEPTTGEVHLRHHVSPNGYYRGRKVVKTKND.

The interval 1–59 (MAVQQNKKSPSKRGMHRSHDFLTTAPIAVEPTTGEVHLRHHVSPNGYYRGRKVVKTKND) is disordered. Over residues 49–59 (RGRKVVKTKND) the composition is skewed to basic residues.

This sequence belongs to the bacterial ribosomal protein bL32 family.

The polypeptide is Large ribosomal subunit protein bL32 (Ralstonia pickettii (strain 12J)).